Here is a 316-residue protein sequence, read N- to C-terminus: 4-diphosphocytidyl-2-C-methyl-D-erythritol kinase (316 aa).

Lys-32 is a catalytic residue. ATP is bound at residue 126–136; the sequence is PVGAGLGGGSA. The active site involves Asp-168.

Belongs to the GHMP kinase family. IspE subfamily.

It catalyses the reaction 4-CDP-2-C-methyl-D-erythritol + ATP = 4-CDP-2-C-methyl-D-erythritol 2-phosphate + ADP + H(+). It functions in the pathway isoprenoid biosynthesis; isopentenyl diphosphate biosynthesis via DXP pathway; isopentenyl diphosphate from 1-deoxy-D-xylulose 5-phosphate: step 3/6. Functionally, catalyzes the phosphorylation of the position 2 hydroxy group of 4-diphosphocytidyl-2C-methyl-D-erythritol. The sequence is that of 4-diphosphocytidyl-2-C-methyl-D-erythritol kinase from Bifidobacterium longum (strain NCC 2705).